The chain runs to 387 residues: Acetylajmalan esterase (387 aa).

A signal peptide spans 1-22 (MGFARLLHLVFSLLVFAGITNG). The active-site Nucleophile is Ser-36. N-linked (GlcNAc...) asparagine glycosylation is found at Asn-98, Asn-180, Asn-199, Asn-249, and Asn-296. Active-site residues include Asp-337 and His-340.

It belongs to the 'GDSL' lipolytic enzyme family.

It carries out the reaction 17-O-acetylajmaline + H2O = ajmaline + acetate + H(+). The catalysed reaction is 17-O-acetylnorajmaline + H2O = norajmaline + acetate + H(+). The protein operates within alkaloid biosynthesis; ajmaline biosynthesis. In terms of biological role, acetylesterase involved in the biosynthesis of ajmaline-type monoterpenoid indole alkaloids (MIAs) natural products, important plant-derived pharmaceuticals used in the therapy of heart disorders. Deacetylates 17-O-acetylajmaline and 17-O-acetylnorajmaline to produce ajmaline and norajmaline, but is inactive toward other acetylated alkaloids. The polypeptide is Acetylajmalan esterase (Rauvolfia serpentina (Serpentine wood)).